Consider the following 289-residue polypeptide: Formamidopyrimidine-DNA glycosylase 1 (289 aa).

Proline 2 functions as the Schiff-base intermediate with DNA in the catalytic mechanism. Glutamate 3 acts as the Proton donor in catalysis. The active-site Proton donor; for beta-elimination activity is lysine 61. The DNA site is built by histidine 100, arginine 119, and lysine 165. The FPG-type zinc finger occupies 251–285; it reads DAYGREGENCRRCGAVIRRERFMNRSSFYCPRCQP. Catalysis depends on arginine 275, which acts as the Proton donor; for delta-elimination activity.

This sequence belongs to the FPG family. Monomer. Zn(2+) serves as cofactor.

The catalysed reaction is Hydrolysis of DNA containing ring-opened 7-methylguanine residues, releasing 2,6-diamino-4-hydroxy-5-(N-methyl)formamidopyrimidine.. The enzyme catalyses 2'-deoxyribonucleotide-(2'-deoxyribose 5'-phosphate)-2'-deoxyribonucleotide-DNA = a 3'-end 2'-deoxyribonucleotide-(2,3-dehydro-2,3-deoxyribose 5'-phosphate)-DNA + a 5'-end 5'-phospho-2'-deoxyribonucleoside-DNA + H(+). Involved in base excision repair of DNA damaged by oxidation or by mutagenic agents. Acts as a DNA glycosylase that recognizes and removes damaged bases. Has a preference for oxidized purines, such as 7,8-dihydro-8-oxoguanine (8-oxoG) when paired with C, G or T, as well as methyl-faPy (formanidopyrimidine residues) in poly(dG-dC) and spiroiminodihydantoin:C base pairs. Unlike its E.coli ortholog has no activity on 8-oxoG:A. Has AP (apurinic/apyrimidinic) lyase activity and introduces nicks in the DNA strand. Cleaves the DNA backbone by beta-delta elimination to generate a single-strand break at the site of the removed base with both 3'- and 5'-phosphates. Cleaves ssDNA containing an AP site. Complements the H(2)O(2) sensitivity of an M.smegmatis fpg disruption mutant; upon expression in M.smegmatis excises 8-oxoG from dsDNA. This is Formamidopyrimidine-DNA glycosylase 1 (fpg1) from Mycobacterium tuberculosis (strain ATCC 25618 / H37Rv).